The following is a 428-amino-acid chain: Histidinol dehydrogenase (428 aa).

NAD(+) is bound by residues Y126, Q188, and N211. Substrate contacts are provided by S234, Q256, and H259. Zn(2+)-binding residues include Q256 and H259. Active-site proton acceptor residues include E324 and H325. 4 residues coordinate substrate: H325, D358, E412, and H417. Zn(2+) is bound at residue D358. Position 417 (H417) interacts with Zn(2+).

Belongs to the histidinol dehydrogenase family. Zn(2+) is required as a cofactor.

It carries out the reaction L-histidinol + 2 NAD(+) + H2O = L-histidine + 2 NADH + 3 H(+). The protein operates within amino-acid biosynthesis; L-histidine biosynthesis; L-histidine from 5-phospho-alpha-D-ribose 1-diphosphate: step 9/9. Its function is as follows. Catalyzes the sequential NAD-dependent oxidations of L-histidinol to L-histidinaldehyde and then to L-histidine. The chain is Histidinol dehydrogenase from Chlorobaculum tepidum (strain ATCC 49652 / DSM 12025 / NBRC 103806 / TLS) (Chlorobium tepidum).